A 142-amino-acid chain; its full sequence is Large ribosomal subunit protein uL16 (142 aa).

It belongs to the universal ribosomal protein uL16 family. In terms of assembly, part of the 50S ribosomal subunit.

Its function is as follows. Binds 23S rRNA and is also seen to make contacts with the A and possibly P site tRNAs. This chain is Large ribosomal subunit protein uL16, found in Trichormus variabilis (strain ATCC 29413 / PCC 7937) (Anabaena variabilis).